The following is a 179-amino-acid chain: Large ribosomal subunit protein uL5 (179 aa).

This sequence belongs to the universal ribosomal protein uL5 family. In terms of assembly, part of the 50S ribosomal subunit; part of the 5S rRNA/L5/L18/L25 subcomplex. Contacts the 5S rRNA and the P site tRNA. Forms a bridge to the 30S subunit in the 70S ribosome.

Functionally, this is one of the proteins that bind and probably mediate the attachment of the 5S RNA into the large ribosomal subunit, where it forms part of the central protuberance. In the 70S ribosome it contacts protein S13 of the 30S subunit (bridge B1b), connecting the 2 subunits; this bridge is implicated in subunit movement. Contacts the P site tRNA; the 5S rRNA and some of its associated proteins might help stabilize positioning of ribosome-bound tRNAs. The sequence is that of Large ribosomal subunit protein uL5 from Bacillus pumilus (strain SAFR-032).